Here is a 584-residue protein sequence, read N- to C-terminus: uncharacterized protein (584 aa).

The helical transmembrane segment at 15–35 (FIFFVLVFFICIIFGCIYESL) threads the bilayer. Polar residues-rich tracts occupy residues 184–194 (DVSTENSYTHN) and 204–225 (GKRT…SYNI). Residues 184 to 226 (DVSTENSYTHNNSRDDEPQNGKRTYNNQSNNNLPYDNSSYNIS) are disordered. Coiled-coil stretches lie at residues 267–319 (DNYP…DNYP) and 436–477 (RDNH…HYKR).

It localises to the membrane. This is an uncharacterized protein from Plasmodium falciparum (isolate 3D7).